Reading from the N-terminus, the 157-residue chain is Large ribosomal subunit protein eL29 (157 aa).

The span at 1–26 shows a compositional bias: basic residues; the sequence is MAKSKNHTTHNQSRKWHRNGIKKPRS. The segment at 1–32 is disordered; that stretch reads MAKSKNHTTHNQSRKWHRNGIKKPRSQRYESL. At Lys5 the chain carries N6-methyllysine. Position 31 is a phosphoserine (Ser31). Lys33 is subject to N6-acetyllysine. The tract at residues 121–157 is disordered; it reads PKAKAKAKDQTKAQAAAPASIPAQAPKGAQATTKATE. Over residues 132–147 the composition is skewed to low complexity; that stretch reads KAQAAAPASIPAQAPK. Residue Ser140 is modified to Phosphoserine.

Belongs to the eukaryotic ribosomal protein eL29 family. In terms of assembly, component of the large ribosomal subunit.

It is found in the cytoplasm. In terms of biological role, component of the large ribosomal subunit. The ribosome is a large ribonucleoprotein complex responsible for the synthesis of proteins in the cell. This is Large ribosomal subunit protein eL29 (RPL29) from Macaca fascicularis (Crab-eating macaque).